The following is a 168-amino-acid chain: Small ribosomal subunit protein uS8 (168 aa).

The segment at 59 to 93 (EEYKKMKELAEKSPNPKMKRYLKQLEEYNKGTQYP) is not found in other S8 sequences.

The protein belongs to the universal ribosomal protein uS8 family. In terms of assembly, part of the 30S ribosomal subunit. Contacts proteins S5 and S12.

Functionally, one of the primary rRNA binding proteins, it binds directly to 16S rRNA central domain where it helps coordinate assembly of the platform of the 30S subunit. The protein is Small ribosomal subunit protein uS8 of Aquifex aeolicus (strain VF5).